The sequence spans 191 residues: Octanoyltransferase (191 aa).

A BPL/LPL catalytic domain is found at 10 to 185 (ENSHDEIWLV…NILALLNNPP (176 aa)). Substrate-binding positions include 49–56 (RGGQVTYH), 116–118 (SLG), and 129–131 (GLA). The active-site Acyl-thioester intermediate is the C147.

The protein belongs to the LipB family.

It is found in the cytoplasm. The enzyme catalyses octanoyl-[ACP] + L-lysyl-[protein] = N(6)-octanoyl-L-lysyl-[protein] + holo-[ACP] + H(+). It participates in protein modification; protein lipoylation via endogenous pathway; protein N(6)-(lipoyl)lysine from octanoyl-[acyl-carrier-protein]: step 1/2. Its function is as follows. Catalyzes the transfer of endogenously produced octanoic acid from octanoyl-acyl-carrier-protein onto the lipoyl domains of lipoate-dependent enzymes. Lipoyl-ACP can also act as a substrate although octanoyl-ACP is likely to be the physiological substrate. The protein is Octanoyltransferase of Salmonella choleraesuis (strain SC-B67).